The sequence spans 452 residues: Gastrin/cholecystokinin type B receptor (452 aa).

Residues 1 to 21 (MELLKLNRSVQGPGPGSGSSL) are disordered. Topologically, residues 1-57 (MELLKLNRSVQGPGPGSGSSLCRPGVSLLNSSSAGNLSCDPPRIRGTGTRELEMAIR) are extracellular. 3 N-linked (GlcNAc...) asparagine glycosylation sites follow: Asn-7, Asn-30, and Asn-36. A helical transmembrane segment spans residues 58 to 79 (ITLYAVIFLMSVGGNVLIIVVL). Topologically, residues 80-87 (GLSRRLRT) are cytoplasmic. The helical transmembrane segment at 88–109 (VTNAFLLSLAVSDLLLAVACMP) threads the bilayer. At 110 to 131 (FTLLPNLMGTFIFGTVICKAIS) the chain is on the extracellular side. Residues Cys-127 and Cys-205 are joined by a disulfide bond. A helical membrane pass occupies residues 132–150 (YLMGVSVSVSTLNLVAIAL). Over 151–170 (ERYSAICRPLQARVWQTRSH) the chain is Cytoplasmic. The chain crosses the membrane as a helical span at residues 171–189 (AARVILATWLLSGLLMVPY). Topologically, residues 190–219 (PVYTMVQPVGPRVLQCMHRWPSARVQQTWS) are extracellular. Residues 220-242 (VLLLLLLFFIPGVVIAVAYGLIS) traverse the membrane as a helical segment. Residues 243–338 (RELYLGLHFD…KLLAKKRVVR (96 aa)) lie on the Cytoplasmic side of the membrane. The disordered stretch occupies residues 257 to 286 (SETQSRARNQGGLPGGAAPGPVHQNGGCRP). A helical transmembrane segment spans residues 339–360 (MLLVIVLLFFLCWLPVYSVNTW). Residues 361–378 (RAFDGPGAQRALSGAPIS) are Extracellular-facing. A helical transmembrane segment spans residues 379–399 (FIHLLSYVSACVNPLVYCFMH). Residues 400 to 452 (RRFRQACLDTCARCCPRPPRARPQPLPDEDPPTPSIASLSRLSYTTISTLGPG) are Cytoplasmic-facing. The S-palmitoyl cysteine moiety is linked to residue Cys-413. A disordered region spans residues 421 to 452 (RPQPLPDEDPPTPSIASLSRLSYTTISTLGPG). The segment covering 434–452 (SIASLSRLSYTTISTLGPG) has biased composition (polar residues).

It belongs to the G-protein coupled receptor 1 family. In terms of tissue distribution, parietal cells, pancreas, brain and various neoplastic tissues.

Its subcellular location is the cell membrane. Receptor for gastrin and cholecystokinin. The CCK-B receptors occur throughout the central nervous system where they modulate anxiety, analgesia, arousal, and neuroleptic activity. This receptor mediates its action by association with G proteins that activate a phosphatidylinositol-calcium second messenger system. The protein is Gastrin/cholecystokinin type B receptor (Cckbr) of Rattus norvegicus (Rat).